Here is a 221-residue protein sequence, read N- to C-terminus: Glutathione peroxidase 6 (221 aa).

The first 19 residues, 1-19 (MFQQFQASCLVLFFLVGFA), serve as a signal peptide directing secretion. The active site involves Sec73. Residue Sec73 is a non-standard amino acid, selenocysteine.

It belongs to the glutathione peroxidase family. Expressed in olfactory epithelium and embryos.

Its subcellular location is the secreted. The enzyme catalyses 2 glutathione + H2O2 = glutathione disulfide + 2 H2O. The polypeptide is Glutathione peroxidase 6 (GPX6) (Homo sapiens (Human)).